A 277-amino-acid chain; its full sequence is Thiazole synthase (277 aa).

Lysine 119 acts as the Schiff-base intermediate with DXP in catalysis. 1-deoxy-D-xylulose 5-phosphate is bound by residues glycine 180, 206–207 (AG), and 228–229 (NT).

It belongs to the ThiG family. Homotetramer. Forms heterodimers with either ThiH or ThiS.

The protein localises to the plastid. Its subcellular location is the chloroplast. The enzyme catalyses [ThiS sulfur-carrier protein]-C-terminal-Gly-aminoethanethioate + 2-iminoacetate + 1-deoxy-D-xylulose 5-phosphate = [ThiS sulfur-carrier protein]-C-terminal Gly-Gly + 2-[(2R,5Z)-2-carboxy-4-methylthiazol-5(2H)-ylidene]ethyl phosphate + 2 H2O + H(+). The protein operates within cofactor biosynthesis; thiamine diphosphate biosynthesis. Its function is as follows. Catalyzes the rearrangement of 1-deoxy-D-xylulose 5-phosphate (DXP) to produce the thiazole phosphate moiety of thiamine. Sulfur is provided by the thiocarboxylate moiety of the carrier protein ThiS. In vitro, sulfur can be provided by H(2)S. This is Thiazole synthase from Pyropia yezoensis (Susabi-nori).